Here is a 521-residue protein sequence, read N- to C-terminus: Importin subunit alpha-4 (521 aa).

The interval 1–29 is disordered; that stretch reads MAENPGLENHRIKSFKNKGRDVETMRRHR. The residue at position 2 (alanine 2) is an N-acetylalanine. An IBB domain is found at 2 to 58; it reads AENPGLENHRIKSFKNKGRDVETMRRHRNEVTVELRKNKRDEHLLKKRNVPQEESLE. Positions 18–29 are enriched in basic and acidic residues; that stretch reads KGRDVETMRRHR. Positions 43–52 match the Nuclear localization signal motif; it reads EHLLKKRNVP. Phosphoserine is present on residues serine 56 and serine 60. Residues 66–106 form an ARM 1; truncated repeat; the sequence is FKAQNVTLEAILQNATSDNPVVQLSAVQAARKLLSSDRNPP. 8 ARM repeats span residues 107 to 149, 150 to 194, 195 to 233, 234 to 278, 279 to 318, 319 to 360, 361 to 400, and 401 to 443; these read IDDL…TSAQ, TQAV…CRDY, VISLGVVKPLLSFINPSIPITFLRNVTWVIVNLCRNKDP, PPPM…EQIQ, MVIDSGVVPFLVPLLSHQEVKVQTAALRAVGNIVTGTDEQ, TQVV…NQQQ, VQAVIDAGLIPMIIHQLAKGDFGTQKEAAWAISNLTISGR, and KDQV…IMAG. The tract at residues 137–229 is NLS binding site (major); the sequence is WALTNIASGT…VTWVIVNLCR (93 aa). The interval 306–394 is NLS binding site (minor); the sequence is RAVGNIVTGT…QKEAAWAISN (89 aa). An ARM 10; atypical repeat occupies 447–485; the sequence is STIAEIIEECGGLEKIEVLQQHENEDIYKLAFEIIDQYF. Tyrosine 484 is modified (phosphotyrosine).

It belongs to the importin alpha family. In terms of assembly, forms a complex with importin subunit beta-1. Interacts with DDX21. Interacts with NCBP1, NCBP2/CBP20 and NCBP3. Interacts with RCC1. Interacts with ZC3H11A. Detected more or less in all tissues examined (Ehrlich ascites tumor cells, testis, kidney, spleen, liver, heart, lung, thymus, skeletal muscle, cerebellum and brain (without cerebellum)).

It is found in the cytoplasm. Its subcellular location is the nucleus. In terms of biological role, functions in nuclear protein import as an adapter protein for nuclear receptor KPNB1. Binds specifically and directly to substrates containing either a simple or bipartite NLS motif. Docking of the importin/substrate complex to the nuclear pore complex (NPC) is mediated by KPNB1 through binding to nucleoporin FxFG repeats and the complex is subsequently translocated through the pore by an energy requiring, Ran-dependent mechanism. At the nucleoplasmic side of the NPC, Ran binds to importin-beta and the three components separate and importin-alpha and -beta are re-exported from the nucleus to the cytoplasm where GTP hydrolysis releases Ran from importin. The directionality of nuclear import is thought to be conferred by an asymmetric distribution of the GTP- and GDP-bound forms of Ran between the cytoplasm and nucleus. In vitro, mediates the nuclear import of human cytomegalovirus UL84 by recognizing a non-classical NLS. The sequence is that of Importin subunit alpha-4 (Kpna3) from Mus musculus (Mouse).